The sequence spans 556 residues: Glucose-6-phosphate isomerase (556 aa).

E360 (proton donor) is an active-site residue. Catalysis depends on residues H391 and K519.

The protein belongs to the GPI family.

It is found in the cytoplasm. It catalyses the reaction alpha-D-glucose 6-phosphate = beta-D-fructose 6-phosphate. It participates in carbohydrate biosynthesis; gluconeogenesis. Its pathway is carbohydrate degradation; glycolysis; D-glyceraldehyde 3-phosphate and glycerone phosphate from D-glucose: step 2/4. Functionally, catalyzes the reversible isomerization of glucose-6-phosphate to fructose-6-phosphate. The chain is Glucose-6-phosphate isomerase from Acinetobacter baumannii (strain ATCC 17978 / DSM 105126 / CIP 53.77 / LMG 1025 / NCDC KC755 / 5377).